A 704-amino-acid polypeptide reads, in one-letter code: Polyribonucleotide nucleotidyltransferase (704 aa).

Mg(2+) is bound by residues Asp487 and Asp493. The 60-residue stretch at 554-613 (PRLLTIKIHPDKIREVIGKGGSTIQAITKETGTQIDIQDDGTIIIASVNAIAAQAAKSRI) folds into the KH domain. Positions 623–691 (GRIYEGKVAK…KQGRIRLSIK (69 aa)) constitute an S1 motif domain.

This sequence belongs to the polyribonucleotide nucleotidyltransferase family. In terms of assembly, component of the RNA degradosome, which is a multiprotein complex involved in RNA processing and mRNA degradation. Mg(2+) is required as a cofactor.

Its subcellular location is the cytoplasm. The enzyme catalyses RNA(n+1) + phosphate = RNA(n) + a ribonucleoside 5'-diphosphate. Functionally, involved in mRNA degradation. Catalyzes the phosphorolysis of single-stranded polyribonucleotides processively in the 3'- to 5'-direction. The protein is Polyribonucleotide nucleotidyltransferase of Xanthomonas axonopodis pv. citri (strain 306).